Reading from the N-terminus, the 270-residue chain is Small ribosomal subunit protein bS1m (270 aa).

The segment at 218–250 (TKQGFKHLGPKPLAYTEKKRETTKQSTKNNVFQ) is disordered.

Belongs to the bacterial ribosomal protein bS1 family.

Its subcellular location is the mitochondrion. The chain is Small ribosomal subunit protein bS1m (RPS1) from Marchantia polymorpha (Common liverwort).